We begin with the raw amino-acid sequence, 385 residues long: Citrate synthase (385 aa).

Catalysis depends on residues H223, H263, and D318.

The protein belongs to the citrate synthase family. In terms of assembly, homodimer.

The catalysed reaction is oxaloacetate + acetyl-CoA + H2O = citrate + CoA + H(+). The protein operates within carbohydrate metabolism; tricarboxylic acid cycle; isocitrate from oxaloacetate: step 1/2. With respect to regulation, allosterically inhibited by NADH. This chain is Citrate synthase (gltA), found in Thermoplasma acidophilum (strain ATCC 25905 / DSM 1728 / JCM 9062 / NBRC 15155 / AMRC-C165).